The primary structure comprises 706 residues: D-(-)-3-hydroxybutyrate oligomer hydrolase (706 aa).

The N-terminal stretch at 1–32 is a signal peptide; sequence MTTTSKNCLTLTSIAAAVAAVLVLSACGGGSA. Ser-311 (charge relay system) is an active-site residue.

This sequence belongs to the D-(-)-3-hydroxybutyrate oligomer hydrolase family.

The protein localises to the secreted. It catalyses the reaction (3R)-hydroxybutanoate dimer + H2O = 2 (R)-3-hydroxybutanoate + H(+). It participates in lipid metabolism; butanoate metabolism. Its function is as follows. Participates in the degradation of poly-3-hydroxybutyrate (PHB). It works downstream of poly(3-hydroxybutyrate) depolymerase, hydrolyzing D(-)-3-hydroxybutyrate oligomers of various length (3HB-oligomers) into 3HB-monomers. This chain is D-(-)-3-hydroxybutyrate oligomer hydrolase, found in Polaromonas sp. (strain JS666 / ATCC BAA-500).